A 512-amino-acid chain; its full sequence is mRNA export factor (512 aa).

Over residues 1 to 15 (MATDIDMLIDLGLDL) the composition is skewed to low complexity. Residues 1-243 (MATDIDMLID…APERKAPAAD (243 aa)) are disordered. The Nuclear export signal signature appears at 5–17 (IDMLIDLGLDLSD). Phosphoserine; by host occurs at positions 16 and 18. 2 stretches are compositionally biased toward acidic residues: residues 16–26 (SDSDLDEDPPE) and 35–51 (LESD…EDME). The interval 104–112 (VWSRLGARR) is interaction with host ALYREF. The short motif at 110–138 (ARRPSCSPEQHGGKVARLQPPPTKAQPAR) is the Nuclear localization signal element. Ser114 bears the Phosphoserine; by host mark. Arg138 carries the post-translational modification Dimethylated arginine; by host. Residues 138–152 (RGGRRGRRRGRGRGG) are RGG-box. The segment covering 139–149 (GGRRGRRRGRG) has biased composition (basic residues). At Arg148 the chain carries Omega-N-methylarginine; by host. Arg150 carries the post-translational modification Dimethylated arginine; by host. Positions 214 to 233 (APPPLMTLAIAPPPADPRAP) are enriched in pro residues. Cys400, His479, Cys483, and Cys488 together coordinate Zn(2+). The segment at 400 to 488 (CYLKARGLCG…HRQECSSRVC (89 aa)) adopts a CHC2-type zinc-finger fold. Positions 500–512 (YVHGKYFYCNSLF) are important for homodimerization.

This sequence belongs to the HHV-1 ICP27 protein family. Homodimer. Interacts with host RBP1; this interaction facilitates the RNA polymerase recruitment to viral transcription sites. Interacts (via the RGG box) with host ALYREF/THOC4; this interaction recruits ALYREF to viral replication compartments and probably directs viral mRNA to the TAP/NFX1 pathway. Interacts with host ALYREF2. Interacts (via the RGG box) with host SRPK1; this interaction relocalizes SRPK1 to the nucleus and seems to alter its activity. Interacts with ICP4; this interaction modulates ICP4 DNA-binding activity. Interacts with host NXF1; this interaction allows efficient export of HHV-1 early and late transcripts. Methylated within the RGG box possibly by host PRMT1. When hypomethylated, ICP27 is exported to the cytoplasm earlier and more rapidly. In terms of processing, phosphorylated.

Its subcellular location is the host cytoplasm. The protein localises to the host nucleus. Functionally, multifunctional regulator of the expression of viral genes that contributes to the shutoff of host protein synthesis and mediates nuclear export of viral intronless mRNAs. Early in infection, this immediate early (EI) protein mediates the inhibition of cellular splicing. This results in the accumulation of unprocessed 3'end pre-mRNAs which can't be exported from the nucleus. Cellular protein synthesis is thereby shut off early after virus infection. Later in the infection, it helps recruit cellular RNA polymerase II to viral replication sites and promotes the nuclear export of viral intronless mRNAs by interacting with mRNAs and host NXF1/TAP. ICP27 binds to NUP62 which may provide facilitated viral mRNA export and may indirectly compete with some host cell transport receptors for binding and inhibit cellular nucleocytoplasmic transport pathways. Also stimulates translation of viral transcripts. Repression of host gene expression blocks the cell cycle at the G1 phase and prevents apoptosis. Seems to silence the 3' splice site of the promyelocytic leukemia (PML) intron 7a, thereby switching PML isoforms from PML-II to PML-V. This could be linked to the accelerated mRNA export induced by ICP27 which might not provide sufficient time for PML pre-mRNA to be spliced in the nucleus. This is mRNA export factor from Homo sapiens (Human).